The following is a 577-amino-acid chain: Arginine--tRNA ligase (577 aa).

The 'HIGH' region motif lies at 122–132 (PNVAKEMHVGH).

It belongs to the class-I aminoacyl-tRNA synthetase family. As to quaternary structure, monomer.

It is found in the cytoplasm. The enzyme catalyses tRNA(Arg) + L-arginine + ATP = L-arginyl-tRNA(Arg) + AMP + diphosphate. The polypeptide is Arginine--tRNA ligase (Escherichia coli (strain K12 / MC4100 / BW2952)).